A 399-amino-acid polypeptide reads, in one-letter code: Aromatic-amino-acid aminotransferase (399 aa).

4 residues coordinate substrate: G36, Y67, W132, and N184. Residue K247 is modified to N6-(pyridoxal phosphate)lysine. Residue R375 participates in substrate binding.

Belongs to the class-I pyridoxal-phosphate-dependent aminotransferase family. As to quaternary structure, homodimer. It depends on pyridoxal 5'-phosphate as a cofactor.

The protein localises to the cytoplasm. The enzyme catalyses an aromatic L-alpha-amino acid + 2-oxoglutarate = an aromatic oxo-acid + L-glutamate. In Pseudomonas aeruginosa (strain ATCC 15692 / DSM 22644 / CIP 104116 / JCM 14847 / LMG 12228 / 1C / PRS 101 / PAO1), this protein is Aromatic-amino-acid aminotransferase (phhC).